A 418-amino-acid chain; its full sequence is Serine/threonine transporter SstT (418 aa).

9 helical membrane passes run 16–36 (SLVS…TLIP), 45–65 (LGTL…LLLV), 83–103 (LLIL…VASF), 142–162 (ALLE…GLSL), 192–212 (PLGI…SALL), 218–238 (LIVL…LIVF), 289–309 (VSIP…ITVL), 317–337 (LGIS…TISA), and 364–384 (VAMQ…SAET).

Belongs to the dicarboxylate/amino acid:cation symporter (DAACS) (TC 2.A.23) family.

Its subcellular location is the cell inner membrane. The catalysed reaction is L-serine(in) + Na(+)(in) = L-serine(out) + Na(+)(out). It catalyses the reaction L-threonine(in) + Na(+)(in) = L-threonine(out) + Na(+)(out). Functionally, involved in the import of serine and threonine into the cell, with the concomitant import of sodium (symport system). This chain is Serine/threonine transporter SstT, found in Tolumonas auensis (strain DSM 9187 / NBRC 110442 / TA 4).